The sequence spans 295 residues: Acetylglutamate kinase (295 aa).

Residues 70–71 (GG), arginine 92, and asparagine 191 each bind substrate.

Belongs to the acetylglutamate kinase family. ArgB subfamily.

The protein localises to the cytoplasm. The catalysed reaction is N-acetyl-L-glutamate + ATP = N-acetyl-L-glutamyl 5-phosphate + ADP. The protein operates within amino-acid biosynthesis; L-arginine biosynthesis; N(2)-acetyl-L-ornithine from L-glutamate: step 2/4. Its function is as follows. Catalyzes the ATP-dependent phosphorylation of N-acetyl-L-glutamate. The sequence is that of Acetylglutamate kinase from Mycobacterium avium (strain 104).